The primary structure comprises 180 residues: Peptidyl-tRNA hydrolase (180 aa).

A tRNA-binding site is contributed by Tyr15. His20 serves as the catalytic Proton acceptor. Residues Phe67, Asn69, and Asn115 each contribute to the tRNA site.

The protein belongs to the PTH family. As to quaternary structure, monomer.

The protein resides in the cytoplasm. It carries out the reaction an N-acyl-L-alpha-aminoacyl-tRNA + H2O = an N-acyl-L-amino acid + a tRNA + H(+). Functionally, hydrolyzes ribosome-free peptidyl-tRNAs (with 1 or more amino acids incorporated), which drop off the ribosome during protein synthesis, or as a result of ribosome stalling. Its function is as follows. Catalyzes the release of premature peptidyl moieties from peptidyl-tRNA molecules trapped in stalled 50S ribosomal subunits, and thus maintains levels of free tRNAs and 50S ribosomes. In Chlamydia pneumoniae (Chlamydophila pneumoniae), this protein is Peptidyl-tRNA hydrolase.